Here is a 999-residue protein sequence, read N- to C-terminus: Ulvan lyase, long isoform (999 aa).

The N-terminal stretch at Met-1 to Ala-21 is a signal peptide. Ser-126–His-127 contacts substrate. The active-site Proton donor/acceptor is the His-127. Asp-189, Asp-199, and Lys-201 together coordinate Ca(2+). Residues Tyr-280 and Arg-297 each coordinate substrate. Residues Asp-300, Asp-303, and Tyr-305 each coordinate Ca(2+). Tyr-361 is a binding site for substrate.

This sequence belongs to the polysaccharide lyase 24 family.

Functionally, ulvan lyase involved in ulvan degradation. Ulvan is the main polysaccharide component of the Ulvales (green seaweed) cell wall. It is composed of disaccharide building blocks comprising 3-sulfated rhamnose (Rha3S) linked to D-glucuronic acid (GlcA), L-iduronic acid (IduA), or D-xylose (Xyl). Ulvan lyase catalyzes preferentially the endolytic cleavage of the glycosidic bond between Rha3S and the uronic acid GlcA, but not IduA, producing oligosaccharides that have unsaturated 4-deoxy-L-threo-hex-4-enopyranosiduronic acid (deltaUA) at the non-reducing end. The most abundant end products in the degradation of the ulvan polysaccharide were deltaUA-Rha3S disaccharides and deltaUA-Rha3S-IduA-Rha3S and deltaUA-Rha3S-Xyl-Rha3S tetrasaccharides. This Alteromonas sp protein is Ulvan lyase, long isoform.